The following is a 549-amino-acid chain: Probable protein kinase UbiB (549 aa).

The region spanning 123–501 (DFDNTPLASA…QQKAHKSNYL (379 aa)) is the Protein kinase domain. ATP is bound by residues 129–137 (LASASISQV) and Lys-152. The active-site Proton acceptor is Asp-287. A run of 2 helical transmembrane segments spans residues 498–518 (SNYL…LFNQ) and 520–540 (ATLW…LLGW).

The protein belongs to the ABC1 family. UbiB subfamily.

It is found in the cell inner membrane. It functions in the pathway cofactor biosynthesis; ubiquinone biosynthesis [regulation]. In terms of biological role, is probably a protein kinase regulator of UbiI activity which is involved in aerobic coenzyme Q (ubiquinone) biosynthesis. The sequence is that of Probable protein kinase UbiB from Shewanella woodyi (strain ATCC 51908 / MS32).